A 1266-amino-acid polypeptide reads, in one-letter code: Phosphatidylinositol 3,4,5-trisphosphate 5-phosphatase 2A (1266 aa).

Residues 15 to 111 (WMHRDLSRAA…GLVTTLLYPV (97 aa)) form the SH2 domain. Residues 114–123 (EETTEDRDYS) are compositionally biased toward basic and acidic residues. Disordered regions lie at residues 114 to 159 (EETT…NVTA) and 879 to 951 (DMGG…DATT). Over residues 136–159 (TASTSSMTGSALVSTDTPPENVTA) the composition is skewed to polar residues. Composition is skewed to basic and acidic residues over residues 915–924 (RVSEEGEKSS) and 931–944 (TKEE…KQDP). The NPXY motif motif lies at 958 to 961 (NPAY). At Tyr-961 the chain carries Phosphotyrosine. 2 disordered regions span residues 986-1132 (PLAN…SALD) and 1147-1174 (EVEY…SFPS). Residues 994-1012 (PPAGSVGKSKPPSGSSAQG) show a composition bias toward low complexity. The segment covering 1045 to 1056 (RPPPDFPPPPLP) has biased composition (pro residues). Residues 1203-1266 (SVDCSVGEWL…LLASLKQQQK (64 aa)) form the SAM domain.

Belongs to the inositol 1,4,5-trisphosphate 5-phosphatase family. Tyrosine phosphorylated by the members of the SRC family after exposure to a diverse array of extracellular stimuli.

Its subcellular location is the cytoplasm. It is found in the cytosol. The protein resides in the cytoskeleton. The protein localises to the membrane. It localises to the cell projection. Its subcellular location is the filopodium. It is found in the lamellipodium. The protein resides in the nucleus. The protein localises to the nucleus speckle. The enzyme catalyses a 1,2-diacyl-sn-glycero-3-phospho-(1D-myo-inositol-3,4,5-trisphosphate) + H2O = a 1,2-diacyl-sn-glycero-3-phospho-(1D-myo-inositol-3,4-bisphosphate) + phosphate. Its function is as follows. Phosphatidylinositol (PtdIns) phosphatase that specifically hydrolyzes the 5-phosphate of phosphatidylinositol-3,4,5-trisphosphate (PtdIns(3,4,5)P3) to produce PtdIns(3,4)P2, thereby negatively regulating the PI3K (phosphoinositide 3-kinase) pathways. Plays a central role in regulation of PI3K-dependent insulin signaling, although the precise molecular mechanisms and signaling pathways remain unclear. Part of a signaling pathway that regulates actin cytoskeleton remodeling. Required for the maintenance and dynamic remodeling of actin structures as well as in endocytosis, having a major impact on ligand-induced EGFR internalization and degradation. Participates in regulation of cortical and submembraneous actin. Regulates cell adhesion and cell spreading. Acts as a negative regulator of the FC-gamma-RIIA receptor (FCGR2A). Mediates signaling from the FC-gamma-RIIB receptor (FCGR2B), playing a central role in terminating signal transduction from activating immune/hematopoietic cell receptor systems. May also hydrolyze PtdIns(1,3,4,5)P4, and could thus affect the levels of the higher inositol polyphosphates like InsP6. The sequence is that of Phosphatidylinositol 3,4,5-trisphosphate 5-phosphatase 2A (inppl1a) from Danio rerio (Zebrafish).